A 790-amino-acid polypeptide reads, in one-letter code: Cadherin-6 (790 aa).

The N-terminal stretch at 1-18 (MRTYRYFLLLFWVGQPYP) is a signal peptide. A propeptide spanning residues 19–53 (TLSTPLSKRTSGFPAKKRALELSGNSKNELNRSKR) is cleaved from the precursor. N49 carries an N-linked (GlcNAc...) asparagine glycan. 5 consecutive Cadherin domains span residues 54–159 (SWMW…EPIF), 160–268 (TKEV…PPRF), 269–383 (PQST…PPVF), 384–486 (SKLA…DNAP), and 487–608 (EFAE…LIHP). Residues 54-615 (SWMWNQFFLL…IHPTGLSTGA (562 aa)) are Extracellular-facing. Residue N255 is glycosylated (N-linked (GlcNAc...) asparagine). Residues 259–288 (TDVNDNPPRFPQSTYQFKTPESSPPGTPIG) form a disordered region. The span at 269–279 (PQSTYQFKTPE) shows a compositional bias: polar residues. 4 N-linked (GlcNAc...) asparagine glycosylation sites follow: N399, N437, N455, and N536. The helical transmembrane segment at 616–636 (LVAILLCIVILLVTVVLFAAL) threads the bilayer. Residues 637 to 790 (RRQRKKEPLI…YGGVDSDKDS (154 aa)) lie on the Cytoplasmic side of the membrane. A phosphoserine mark is found at S786 and S790.

In terms of tissue distribution, highly expressed in brain, cerebellum, and kidney. Lung, pancreas, and gastric mucosa show a weak expression. Also expressed in certain liver and kidney carcinomas.

The protein localises to the cell membrane. Functionally, cadherins are calcium-dependent cell adhesion proteins. They preferentially interact with themselves in a homophilic manner in connecting cells; cadherins may thus contribute to the sorting of heterogeneous cell types. The protein is Cadherin-6 (CDH6) of Homo sapiens (Human).